The primary structure comprises 453 residues: Acyl-coenzyme A thioesterase 2, mitochondrial (453 aa).

The transit peptide at Met-1–Thr-42 directs the protein to the mitochondrion. Lys-83 is modified (N6-acetyllysine). Catalysis depends on charge relay system residues Ser-273, Asp-365, and His-399. N6-succinyllysine is present on Lys-447.

The protein belongs to the C/M/P thioester hydrolase family. In terms of assembly, monomer. Highly expressed in brown and white adipose tissue, muscle, heart, kidney, lung, adrenal gland and spleen; weakly expressed in intestine, testis and brain.

The protein resides in the mitochondrion matrix. It catalyses the reaction hexadecanoyl-CoA + H2O = hexadecanoate + CoA + H(+). The catalysed reaction is tetradecanoyl-CoA + H2O = tetradecanoate + CoA + H(+). It carries out the reaction octadecanoyl-CoA + H2O = octadecanoate + CoA + H(+). The enzyme catalyses eicosanoyl-CoA + H2O = eicosanoate + CoA + H(+). It catalyses the reaction decanoyl-CoA + H2O = decanoate + CoA + H(+). The catalysed reaction is dodecanoyl-CoA + H2O = dodecanoate + CoA + H(+). It carries out the reaction (9Z)-octadecenoyl-CoA + H2O = (9Z)-octadecenoate + CoA + H(+). The enzyme catalyses (9Z)-hexadecenoyl-CoA + H2O = (9Z)-hexadecenoate + CoA + H(+). It catalyses the reaction (9E)-octadecenoyl-CoA + H2O = (9E)-octadecenoate + CoA + H(+). The catalysed reaction is (9Z,12Z)-octadecadienoyl-CoA + H2O = (9Z,12Z)-octadecadienoate + CoA + H(+). It functions in the pathway lipid metabolism; fatty acid metabolism. In terms of biological role, catalyzes the hydrolysis of acyl-CoAs into free fatty acids and coenzyme A (CoASH), regulating their respective intracellular levels. Displays higher activity toward long chain acyl CoAs (C14-C20). The enzyme is involved in enhancing the hepatic fatty acid oxidation in mitochondria. The chain is Acyl-coenzyme A thioesterase 2, mitochondrial (Acot2) from Mus musculus (Mouse).